Here is a 550-residue protein sequence, read N- to C-terminus: U-box domain-containing protein 40 (550 aa).

The segment covering 19–29 (KSDNLSRRESL) has biased composition (basic and acidic residues). The disordered stretch occupies residues 19 to 55 (KSDNLSRRESLAGKSKWRTSLSRSSSSSSSNNNSPTK). Positions 38 to 52 (SLSRSSSSSSSNNNS) are enriched in low complexity. The U-box domain occupies 57 to 127 (EIPAEFLCPI…HSWCERRCFP (71 aa)). ARM repeat units lie at residues 260–299 (ESSR…NLSL), 301–340 (KSNK…SLAL), 342–381 (DENK…HLSL), 383–420 (QSNR…NMAS), and 422–464 (PVSR…GLSH).

It carries out the reaction S-ubiquitinyl-[E2 ubiquitin-conjugating enzyme]-L-cysteine + [acceptor protein]-L-lysine = [E2 ubiquitin-conjugating enzyme]-L-cysteine + N(6)-ubiquitinyl-[acceptor protein]-L-lysine.. It functions in the pathway protein modification; protein ubiquitination. Functions as an E3 ubiquitin ligase. This is U-box domain-containing protein 40 (PUB40) from Arabidopsis thaliana (Mouse-ear cress).